The sequence spans 490 residues: Probable cytosol aminopeptidase (490 aa).

Mn(2+)-binding residues include Lys257 and Asp262. Lys269 is a catalytic residue. Mn(2+) is bound by residues Asp281, Asp341, and Glu343. Residue Arg345 is part of the active site.

It belongs to the peptidase M17 family. Mn(2+) is required as a cofactor.

Its subcellular location is the cytoplasm. The enzyme catalyses Release of an N-terminal amino acid, Xaa-|-Yaa-, in which Xaa is preferably Leu, but may be other amino acids including Pro although not Arg or Lys, and Yaa may be Pro. Amino acid amides and methyl esters are also readily hydrolyzed, but rates on arylamides are exceedingly low.. It catalyses the reaction Release of an N-terminal amino acid, preferentially leucine, but not glutamic or aspartic acids.. Its function is as follows. Presumably involved in the processing and regular turnover of intracellular proteins. Catalyzes the removal of unsubstituted N-terminal amino acids from various peptides. The sequence is that of Probable cytosol aminopeptidase from Prochlorococcus marinus (strain MIT 9312).